Reading from the N-terminus, the 105-residue chain is U-scoloptoxin(05)-Sa2a (105 aa).

An N-terminal signal peptide occupies residues 1 to 24 (MKEAVKMSCLCIFLFLFLFSLTDA). The segment at 79 to 105 (HVPESNQKDGKVSTHMSSCNTDGCNAN) is disordered. A compositionally biased stretch (polar residues) spans 92–105 (THMSSCNTDGCNAN).

This sequence belongs to the scoloptoxin-05 family. In terms of processing, contains 4 disulfide bonds. In terms of tissue distribution, expressed by the venom gland.

It localises to the secreted. The polypeptide is U-scoloptoxin(05)-Sa2a (Scolopendra alternans (Florida Keys giant centipede)).